The chain runs to 151 residues: Large ribosomal subunit protein bL9 (151 aa).

This sequence belongs to the bacterial ribosomal protein bL9 family.

Its function is as follows. Binds to the 23S rRNA. In Mycolicibacterium gilvum (strain PYR-GCK) (Mycobacterium gilvum (strain PYR-GCK)), this protein is Large ribosomal subunit protein bL9.